The sequence spans 734 residues: Elongation factor G, mitochondrial (734 aa).

A mitochondrion-targeting transit peptide spans Met1–Phe32. Residues Ser38–Asn318 enclose the tr-type G domain. GTP is bound by residues Ala47–Thr54, Asp114–His118, and Asn168–Asp171.

It belongs to the TRAFAC class translation factor GTPase superfamily. Classic translation factor GTPase family. EF-G/EF-2 subfamily.

Its subcellular location is the mitochondrion. The enzyme catalyses GTP + H2O = GDP + phosphate + H(+). It functions in the pathway protein biosynthesis; polypeptide chain elongation. Its function is as follows. Mitochondrial GTPase that catalyzes the GTP-dependent ribosomal translocation step during translation elongation. During this step, the ribosome changes from the pre-translocational (PRE) to the post-translocational (POST) state as the newly formed A-site-bound peptidyl-tRNA and P-site-bound deacylated tRNA move to the P and E sites, respectively. Catalyzes the coordinated movement of the two tRNA molecules, the mRNA and conformational changes in the ribosome. This is Elongation factor G, mitochondrial (gfm1) from Dictyostelium discoideum (Social amoeba).